Here is a 325-residue protein sequence, read N- to C-terminus: Large ribosomal subunit protein uL18 (325 aa).

Positions 247–300 are disordered; the sequence is IRIPPSRRNPRRRSPRSGGRWPSCRSPPARRRSRSTRPTSWPRSRPTSKPKRPR. Low complexity-rich tracts occupy residues 262–273 and 282–291; these read RSGGRWPSCRSP and TRPTSWPRSR.

The protein belongs to the universal ribosomal protein uL18 family. As to quaternary structure, component of the large ribosomal subunit (LSU).

It localises to the cytoplasm. The protein localises to the nucleus. Its function is as follows. Component of the ribosome, a large ribonucleoprotein complex responsible for the synthesis of proteins in the cell. The small ribosomal subunit (SSU) binds messenger RNAs (mRNAs) and translates the encoded message by selecting cognate aminoacyl-transfer RNA (tRNA) molecules. The large subunit (LSU) contains the ribosomal catalytic site termed the peptidyl transferase center (PTC), which catalyzes the formation of peptide bonds, thereby polymerizing the amino acids delivered by tRNAs into a polypeptide chain. The nascent polypeptides leave the ribosome through a tunnel in the LSU and interact with protein factors that function in enzymatic processing, targeting, and the membrane insertion of nascent chains at the exit of the ribosomal tunnel. In Anopheles gambiae (African malaria mosquito), this protein is Large ribosomal subunit protein uL18 (RpL5).